We begin with the raw amino-acid sequence, 243 residues long: Small ribosomal subunit protein uS3 (243 aa).

The KH type-2 domain occupies 38-106 (IRKYLNARLA…DIQINIFEVK (69 aa)). The disordered stretch occupies residues 217-243 (TQTKESGRGGNGNNNGGKNFKRKKNNR).

Belongs to the universal ribosomal protein uS3 family. In terms of assembly, part of the 30S ribosomal subunit. Forms a tight complex with proteins S10 and S14.

In terms of biological role, binds the lower part of the 30S subunit head. Binds mRNA in the 70S ribosome, positioning it for translation. The sequence is that of Small ribosomal subunit protein uS3 from Phocaeicola vulgatus (strain ATCC 8482 / DSM 1447 / JCM 5826 / CCUG 4940 / NBRC 14291 / NCTC 11154) (Bacteroides vulgatus).